A 648-amino-acid chain; its full sequence is MLHPRVIRLRFACKLTLAIVLSLLLGFYFGLQTPRWSALTAALVAAGPAFAAGGEPFAGAIRYRGWLRIIGTVLGSLCALLLMMLLIRAPLLMILLCCLWAGVCTWLSSLVRMENAYALGLSGYTALIIVVSCLGEPQFILQLALERCGEIVLGIACAVLADTLLAPRSVKGEVDRVVGGMLLGQLCLLQRCVDGRDSDAVDRSWHGLIRESHTLEGMRASLALESSRWPRACRRLAALHTLSLTLITRACEIFLTQRQTPTALPAPFLTLIAAPVKTPAEAYQRLKQLRRLLAAHGGHQLPPALIGWIDGASQLQLLAKGVASNVRIGRHEAAILAHDAAPRQIYSAQGHHALINGLRTWLATSLGALFWLWSGWNAGSGCMIMIAVVTSLAVRTPNPRMAAIDFLMGSLVALPVGALYYTVILPATQQSLVLLCLSLGALTFICGMEVQKRRLGSLGTLASTLNILVLSNPMRFPIESFVDSAIGQVIGCLLALVVLLAVRDRSRARTGRTLMRRLAFGAVAALRGEGTRGNLLPALYRQLFLLLTLFPDDIGRYRLALTLIVLQQRLAHSALPCDAERLRAIDAAATRLLTGRGAARRRGALLQLTTGLSDYADALVRQGAAGAALQPLHQLADVLHRYRGVLLG.

The next 11 helical transmembrane spans lie at 11–31 (FACKLTLAIVLSLLLGFYFGL), 41–61 (AALVAAGPAFAAGGEPFAGAI), 65–87 (GWLRIIGTVLGSLCALLLMMLLI), 91–110 (LLMILLCCLWAGVCTWLSSL), 125–145 (TALIIVVSCLGEPQFILQLAL), 150–170 (EIVLGIACAVLADTLLAPRSV), 369–389 (LFWLWSGWNAGSGCMIMIAVV), 406–426 (FLMGSLVALPVGALYYTVILP), 430–450 (QSLVLLCLSLGALTFICGMEV), 455–474 (LGSLGTLASTLNILVLSNPM), and 481–501 (FVDSAIGQVIGCLLALVVLLA).

It belongs to the aromatic acid exporter ArAE (TC 2.A.85) family.

The protein resides in the cell inner membrane. Its function is as follows. Forms an efflux pump with AaeA. Could function as a metabolic relief valve, allowing to eliminate certain compounds when they accumulate to high levels in the cell. The sequence is that of p-hydroxybenzoic acid efflux pump subunit AaeB (aaeB) from Edwardsiella tarda (strain FL6-60).